The primary structure comprises 152 residues: Protein-export protein SecB (152 aa).

The protein belongs to the SecB family. Homotetramer, a dimer of dimers. One homotetramer interacts with 1 SecA dimer.

Its subcellular location is the cytoplasm. Functionally, one of the proteins required for the normal export of preproteins out of the cell cytoplasm. It is a molecular chaperone that binds to a subset of precursor proteins, maintaining them in a translocation-competent state. It also specifically binds to its receptor SecA. The chain is Protein-export protein SecB from Rickettsia massiliae (strain Mtu5).